Reading from the N-terminus, the 225-residue chain is Probable molybdenum cofactor guanylyltransferase (225 aa).

GTP is bound by residues 20–22 (LAG), K33, D88, and D117. A Mg(2+)-binding site is contributed by D117.

This sequence belongs to the MobA family. Mg(2+) is required as a cofactor.

The protein resides in the cytoplasm. The enzyme catalyses Mo-molybdopterin + GTP + H(+) = Mo-molybdopterin guanine dinucleotide + diphosphate. In terms of biological role, transfers a GMP moiety from GTP to Mo-molybdopterin (Mo-MPT) cofactor (Moco or molybdenum cofactor) to form Mo-molybdopterin guanine dinucleotide (Mo-MGD) cofactor. The protein is Probable molybdenum cofactor guanylyltransferase of Methanosarcina acetivorans (strain ATCC 35395 / DSM 2834 / JCM 12185 / C2A).